We begin with the raw amino-acid sequence, 356 residues long: Mitogen-activated protein kinase PMK11 (356 aa).

Residues 24 to 312 (YDIQDVVGEG…VEEALKHPYL (289 aa)) form the Protein kinase domain. ATP-binding positions include 30-38 (VGEGAYGVV) and K53.

The protein belongs to the protein kinase superfamily. CMGC Ser/Thr protein kinase family. MAP kinase subfamily. It depends on Mg(2+) as a cofactor. In terms of processing, phosphorylated by MST7.

It catalyses the reaction L-seryl-[protein] + ATP = O-phospho-L-seryl-[protein] + ADP + H(+). The enzyme catalyses L-threonyl-[protein] + ATP = O-phospho-L-threonyl-[protein] + ADP + H(+). Functionally, mitogen-activated protein kinase; part of the MST11-MST7-PMK1 MAP kinase (MAPK) cascade that is essential for appressorium formation, penetration and invasive growth. Central regulator of appressorium development that acts downstream of the cAMP signal. The MST11-MST7-PMK1 MAP kinase cascade transduces signals from the cell surface sensors MDB2 and SHO1 that recognize various surface signals such as surface hydrophobicity, cutin monomers, and rice leaf waxes. Regulates expression of secreted fungal effector proteins implicated of host immune defenses, preventing reactive oxygen species generation and excessive callose deposition at plasmodesmata. Furthermore, controls the hyphal constriction required for fungal growth from one rice cell to the neighboring cell, enabling host tissue colonization and blast disease. Targets downstream of the PMK1-MAPK pathway include transcription factor MST12 and pathogenicity-related genes GAS1 and GAS2, both of which are expressed during appressorium formation, even if regulation of MST12 is not associated with expression of GAS1 or GAS2. The sequence is that of Mitogen-activated protein kinase PMK11 from Pyricularia oryzae (strain 70-15 / ATCC MYA-4617 / FGSC 8958) (Rice blast fungus).